A 264-amino-acid chain; its full sequence is Caffeoyl-CoA O-methyltransferase 2 (264 aa).

Residues 1–20 (MATTATEATKTTAPAQEQQA) show a composition bias toward low complexity. Positions 1-37 (MATTATEATKTTAPAQEQQANGNGNGEQKTRHSEVGH) are disordered. Positions 28–37 (QKTRHSEVGH) are enriched in basic and acidic residues. Residue K38 participates in substrate binding. S-adenosyl-L-methionine-binding positions include T80, E102, 104–105 (GV), S110, D128, and A157. Residue D180 coordinates substrate. Residue D180 participates in a divalent metal cation binding. D182 contacts S-adenosyl-L-methionine. A divalent metal cation contacts are provided by D206 and N207. Residue N211 coordinates substrate.

It belongs to the class I-like SAM-binding methyltransferase superfamily. Cation-dependent O-methyltransferase family. CCoAMT subfamily. The cofactor is a divalent metal cation.

It carries out the reaction (E)-caffeoyl-CoA + S-adenosyl-L-methionine = (E)-feruloyl-CoA + S-adenosyl-L-homocysteine + H(+). The protein operates within aromatic compound metabolism; phenylpropanoid biosynthesis. In terms of biological role, methylates caffeoyl-CoA to feruloyl-CoA and 5-hydroxyferuloyl-CoA to sinapoyl-CoA. Plays a role in the synthesis of feruloylated polysaccharides. Involved in the reinforcement of the plant cell wall. Also involved in the responding to wounding or pathogen challenge by the increased formation of cell wall-bound ferulic acid polymers. This is Caffeoyl-CoA O-methyltransferase 2 (CCOAOMT2) from Zea mays (Maize).